A 177-amino-acid polypeptide reads, in one-letter code: Ribosome maturation factor RimM (177 aa).

The 78-residue stretch at 100–177 (EDEYYWSDLV…TVLVAWPSDY (78 aa)) folds into the PRC barrel domain.

Belongs to the RimM family. Binds ribosomal protein uS19.

It is found in the cytoplasm. An accessory protein needed during the final step in the assembly of 30S ribosomal subunit, possibly for assembly of the head region. Essential for efficient processing of 16S rRNA. May be needed both before and after RbfA during the maturation of 16S rRNA. It has affinity for free ribosomal 30S subunits but not for 70S ribosomes. The protein is Ribosome maturation factor RimM of Psychrobacter arcticus (strain DSM 17307 / VKM B-2377 / 273-4).